Here is a 128-residue protein sequence, read N- to C-terminus: Large ribosomal subunit protein bL12 (128 aa).

Belongs to the bacterial ribosomal protein bL12 family. In terms of assembly, homodimer. Part of the ribosomal stalk of the 50S ribosomal subunit. Forms a multimeric L10(L12)X complex, where L10 forms an elongated spine to which 2 to 4 L12 dimers bind in a sequential fashion. Binds GTP-bound translation factors.

Functionally, forms part of the ribosomal stalk which helps the ribosome interact with GTP-bound translation factors. Is thus essential for accurate translation. The chain is Large ribosomal subunit protein bL12 from Synechococcus sp. (strain CC9902).